The chain runs to 275 residues: Succinate dehydrogenase [ubiquinone] iron-sulfur subunit, mitochondrial (275 aa).

Residues 1–24 (MFSRRIQVLSPFLKHFVNRNARMM) constitute a mitochondrion transit peptide. The 81-residue stretch at 57 to 137 (PEVKPKLQKY…PTKIYPLPHC (81 aa)) folds into the 2Fe-2S ferredoxin-type domain. [2Fe-2S] cluster-binding residues include Cys-98, Cys-103, Cys-106, and Cys-118. In terms of domain architecture, 4Fe-4S ferredoxin-type spans 178-208 (DRAKLDGLYECILCACCSTSCPSYWWNSEEY). Positions 188, 191, and 194 each coordinate [4Fe-4S] cluster. Residue Cys-198 participates in [3Fe-4S] cluster binding. Trp-203 is a binding site for a ubiquinone. [3Fe-4S] cluster contacts are provided by Cys-245 and Cys-251. Residue Cys-255 coordinates [4Fe-4S] cluster.

It belongs to the succinate dehydrogenase/fumarate reductase iron-sulfur protein family. As to quaternary structure, component of complex II composed of four subunits: a flavoprotein (FP), an iron-sulfur protein (IP), and a cytochrome b composed of a large and a small subunit. The cofactor is [2Fe-2S] cluster. [3Fe-4S] cluster serves as cofactor. Requires [4Fe-4S] cluster as cofactor.

The protein localises to the mitochondrion inner membrane. It catalyses the reaction a quinone + succinate = fumarate + a quinol. The protein operates within carbohydrate metabolism; tricarboxylic acid cycle; fumarate from succinate (eukaryal route): step 1/1. In terms of biological role, iron-sulfur protein (IP) subunit of succinate dehydrogenase (SDH) that is involved in complex II of the mitochondrial electron transport chain and is responsible for transferring electrons from succinate to ubiquinone (coenzyme Q). The polypeptide is Succinate dehydrogenase [ubiquinone] iron-sulfur subunit, mitochondrial (sdh2) (Schizosaccharomyces pombe (strain 972 / ATCC 24843) (Fission yeast)).